A 600-amino-acid polypeptide reads, in one-letter code: Elongation factor 4 (600 aa).

Residues 5 to 187 (KYIRNFSIIA…AIINKLPSPK (183 aa)) enclose the tr-type G domain. Residues 17 to 22 (DHGKST) and 134 to 137 (NKID) contribute to the GTP site.

Belongs to the TRAFAC class translation factor GTPase superfamily. Classic translation factor GTPase family. LepA subfamily.

The protein resides in the cell inner membrane. It catalyses the reaction GTP + H2O = GDP + phosphate + H(+). Its function is as follows. Required for accurate and efficient protein synthesis under certain stress conditions. May act as a fidelity factor of the translation reaction, by catalyzing a one-codon backward translocation of tRNAs on improperly translocated ribosomes. Back-translocation proceeds from a post-translocation (POST) complex to a pre-translocation (PRE) complex, thus giving elongation factor G a second chance to translocate the tRNAs correctly. Binds to ribosomes in a GTP-dependent manner. This is Elongation factor 4 from Rickettsia typhi (strain ATCC VR-144 / Wilmington).